The following is an 83-amino-acid chain: Sec-independent protein translocase protein TatA (83 aa).

Residues 1-21 (MGGLSLPHLIVLALVVLILFG) form a helical membrane-spanning segment. The segment at 34-83 (KGIKSFKQGMNDEDSKPVTPPPAQIPPASLQQTPPPAQPAPQPTSTDQAQ) is disordered. A compositionally biased stretch (pro residues) spans 66-75 (TPPPAQPAPQ).

This sequence belongs to the TatA/E family. In terms of assembly, the Tat system comprises two distinct complexes: a TatABC complex, containing multiple copies of TatA, TatB and TatC subunits, and a separate TatA complex, containing only TatA subunits. Substrates initially bind to the TatABC complex, which probably triggers association of the separate TatA complex to form the active translocon.

It is found in the cell inner membrane. Its function is as follows. Part of the twin-arginine translocation (Tat) system that transports large folded proteins containing a characteristic twin-arginine motif in their signal peptide across membranes. TatA could form the protein-conducting channel of the Tat system. This Novosphingobium aromaticivorans (strain ATCC 700278 / DSM 12444 / CCUG 56034 / CIP 105152 / NBRC 16084 / F199) protein is Sec-independent protein translocase protein TatA.